The chain runs to 182 residues: NADH-quinone oxidoreductase subunit I (182 aa).

2 4Fe-4S ferredoxin-type domains span residues 52–82 (LTRD…LQKA) and 92–121 (EFFR…LTPD). Residues Cys62, Cys65, Cys68, Cys72, Cys101, Cys104, Cys107, and Cys111 each contribute to the [4Fe-4S] cluster site.

Belongs to the complex I 23 kDa subunit family. NDH-1 is composed of 13 different subunits. Subunits NuoA, H, J, K, L, M, N constitute the membrane sector of the complex. Requires [4Fe-4S] cluster as cofactor.

It localises to the cell inner membrane. The catalysed reaction is a quinone + NADH + 5 H(+)(in) = a quinol + NAD(+) + 4 H(+)(out). NDH-1 shuttles electrons from NADH, via FMN and iron-sulfur (Fe-S) centers, to quinones in the respiratory chain. The immediate electron acceptor for the enzyme in this species is believed to be ubiquinone. Couples the redox reaction to proton translocation (for every two electrons transferred, four hydrogen ions are translocated across the cytoplasmic membrane), and thus conserves the redox energy in a proton gradient. In Pseudomonas putida (strain ATCC 47054 / DSM 6125 / CFBP 8728 / NCIMB 11950 / KT2440), this protein is NADH-quinone oxidoreductase subunit I.